Here is a 38-residue protein sequence, read N- to C-terminus: Cytochrome b6-f complex subunit 5 (38 aa).

Residues 5–25 (LLSGIVLGLIPITLAGLFVTA) form a helical membrane-spanning segment.

The protein belongs to the PetG family. In terms of assembly, the 4 large subunits of the cytochrome b6-f complex are cytochrome b6, subunit IV (17 kDa polypeptide, PetD), cytochrome f and the Rieske protein, while the 4 small subunits are PetG, PetL, PetM and PetN. The complex functions as a dimer.

It is found in the plastid. The protein localises to the chloroplast thylakoid membrane. Its function is as follows. Component of the cytochrome b6-f complex, which mediates electron transfer between photosystem II (PSII) and photosystem I (PSI), cyclic electron flow around PSI, and state transitions. PetG is required for either the stability or assembly of the cytochrome b6-f complex. This chain is Cytochrome b6-f complex subunit 5, found in Adiantum capillus-veneris (Maidenhair fern).